Consider the following 157-residue polypeptide: Regenerating islet-derived protein 4 (157 aa).

Positions 1-22 (MASKCVRLLLLLSWVAGPEVLS) are cleaved as a signal peptide. Cys-29 and Cys-40 are disulfide-bonded. The 119-residue stretch at 36–154 (YRSHCYGYFR…CTKRQHFLCK (119 aa)) folds into the C-type lectin domain. Asn-49, Asn-62, and Asn-101 each carry an N-linked (GlcNAc...) asparagine glycan. 2 cysteine pairs are disulfide-bonded: Cys-57–Cys-153 and Cys-128–Cys-145. A carbohydrate-binding positions include 97-101 (DPQKN) and 134-136 (KDK).

It is found in the secreted. Its function is as follows. Calcium-independent lectin displaying mannose-binding specificity and able to maintain carbohydrate recognition activity in an acidic environment. May be involved in inflammatory and metaplastic responses of the gastrointestinal epithelium. The sequence is that of Regenerating islet-derived protein 4 (Reg4) from Rattus norvegicus (Rat).